Consider the following 547-residue polypeptide: Glucose-6-phosphate isomerase (547 aa).

Residue glutamate 354 is the Proton donor of the active site. Active-site residues include histidine 385 and lysine 513.

It belongs to the GPI family.

It is found in the cytoplasm. The catalysed reaction is alpha-D-glucose 6-phosphate = beta-D-fructose 6-phosphate. It functions in the pathway carbohydrate biosynthesis; gluconeogenesis. Its pathway is carbohydrate degradation; glycolysis; D-glyceraldehyde 3-phosphate and glycerone phosphate from D-glucose: step 2/4. Its function is as follows. Catalyzes the reversible isomerization of glucose-6-phosphate to fructose-6-phosphate. The polypeptide is Glucose-6-phosphate isomerase (Endomicrobium trichonymphae).